The chain runs to 298 residues: MQLVLRDIDQGPFLSKVLAKGQADDTLSGEQLAQIKSKAILMSLKLADKFYNKYKMHLLEQAAHDVIGVVSLGLMELSNQDQQQALRLLITADGVVKCFQKGWSMLSVVSKHKLVNSKSLYGDVDKFLLEQVSTPPDADEWLGYEAYQDALVEHQRQQSIAALMAQFYAQTSYDPLDFLNLESVLAEAVLYRMLFDNAKVRQDLKKRIAKISLQDEWFSLEYIEQQTQQALAELPAELADTIGKDLGKNFAPALLRTLHFAKSYRELLLNDASPERLERFEHKEGLVGLLGWPLYIVL.

Interacts with the C-terminal extension of AtcJ. Also interacts with AtcB, but not with AtcA.

With respect to regulation, interaction with AtcJ stabilizes AtcC. In terms of biological role, involved in cold adaptation. The chain is Adaptation to cold protein C from Shewanella oneidensis (strain ATCC 700550 / JCM 31522 / CIP 106686 / LMG 19005 / NCIMB 14063 / MR-1).